The sequence spans 321 residues: Tetraacyldisaccharide 4'-kinase (321 aa).

54–61 (SVGGTGKT) is a binding site for ATP.

Belongs to the LpxK family.

It catalyses the reaction a lipid A disaccharide + ATP = a lipid IVA + ADP + H(+). It participates in glycolipid biosynthesis; lipid IV(A) biosynthesis; lipid IV(A) from (3R)-3-hydroxytetradecanoyl-[acyl-carrier-protein] and UDP-N-acetyl-alpha-D-glucosamine: step 6/6. Functionally, transfers the gamma-phosphate of ATP to the 4'-position of a tetraacyldisaccharide 1-phosphate intermediate (termed DS-1-P) to form tetraacyldisaccharide 1,4'-bis-phosphate (lipid IVA). The chain is Tetraacyldisaccharide 4'-kinase from Rickettsia typhi (strain ATCC VR-144 / Wilmington).